Consider the following 252-residue polypeptide: Geranylgeranylglyceryl phosphate synthase (252 aa).

The Mg(2+) site is built by Asp27 and Thr57. Sn-glycerol 1-phosphate-binding positions include 175-181, 206-207, and 228-229; these read YLEAGSG, GG, and GN.

The protein belongs to the GGGP/HepGP synthase family. Group II subfamily. Requires Mg(2+) as cofactor.

Its subcellular location is the cytoplasm. The catalysed reaction is sn-glycerol 1-phosphate + (2E,6E,10E)-geranylgeranyl diphosphate = sn-3-O-(geranylgeranyl)glycerol 1-phosphate + diphosphate. The protein operates within membrane lipid metabolism; glycerophospholipid metabolism. Functionally, prenyltransferase that catalyzes the transfer of the geranylgeranyl moiety of geranylgeranyl diphosphate (GGPP) to the C3 hydroxyl of sn-glycerol-1-phosphate (G1P). This reaction is the first ether-bond-formation step in the biosynthesis of archaeal membrane lipids. The protein is Geranylgeranylglyceryl phosphate synthase of Metallosphaera sedula (strain ATCC 51363 / DSM 5348 / JCM 9185 / NBRC 15509 / TH2).